The chain runs to 240 residues: Probable 2-phosphosulfolactate phosphatase (240 aa).

The protein belongs to the ComB family. Mg(2+) serves as cofactor.

It carries out the reaction (2R)-O-phospho-3-sulfolactate + H2O = (2R)-3-sulfolactate + phosphate. The sequence is that of Probable 2-phosphosulfolactate phosphatase from Clostridium kluyveri (strain NBRC 12016).